A 419-amino-acid polypeptide reads, in one-letter code: Appendage-associated protein (419 aa).

The N-terminal stretch at 1 to 39 (MIVTYGTVGCPVSRGGSPGCGRRIAEELRLAEDARLRLA) is a signal peptide. A coiled-coil region spans residues 232–262 (ERQKAQRRREERAAKAREELRKELNDIDAKW).

It is found in the secreted. Associates with actin filament appendages that are formed in the inclusion appendages of the parasitophorous vacuole during infection of the host erythrocyte. The polypeptide is Appendage-associated protein (Anaplasma marginale (strain St. Maries)).